Reading from the N-terminus, the 221-residue chain is 7-cyano-7-deazaguanine synthase (221 aa).

10–20 (FSGGQDSTTCL) contributes to the ATP binding site. Zn(2+) is bound by residues Cys-186, Cys-195, Cys-198, and Cys-201.

This sequence belongs to the QueC family. In terms of assembly, homodimer. The cofactor is Zn(2+).

It catalyses the reaction 7-carboxy-7-deazaguanine + NH4(+) + ATP = 7-cyano-7-deazaguanine + ADP + phosphate + H2O + H(+). Its pathway is purine metabolism; 7-cyano-7-deazaguanine biosynthesis. In terms of biological role, catalyzes the ATP-dependent conversion of 7-carboxy-7-deazaguanine (CDG) to 7-cyano-7-deazaguanine (preQ(0)). The sequence is that of 7-cyano-7-deazaguanine synthase from Anoxybacillus flavithermus (strain DSM 21510 / WK1).